Consider the following 138-residue polypeptide: MGDKTKVQVSKLKPGRYIIIDDEPCRIVNITVSSPGKHGSAKARIEAVGIFDGKVRSIVKPTSAEVDVPIIDKRTAQVIAVTPDTVQIMDMETYEMFEVPLDTGVEEEIKDKIKEGINVEYWETLGRIKIMRIKGEEE.

Hypusine is present on Lys37.

The protein belongs to the eIF-5A family.

The protein resides in the cytoplasm. Functions by promoting the formation of the first peptide bond. In Pyrococcus furiosus (strain ATCC 43587 / DSM 3638 / JCM 8422 / Vc1), this protein is Translation initiation factor 5A.